A 299-amino-acid chain; its full sequence is Recombination-associated protein RdgC (299 aa).

The protein belongs to the RdgC family.

The protein localises to the cytoplasm. The protein resides in the nucleoid. In terms of biological role, may be involved in recombination. In Neisseria meningitidis serogroup B (strain ATCC BAA-335 / MC58), this protein is Recombination-associated protein RdgC.